A 745-amino-acid chain; its full sequence is Immunoglobulin superfamily containing leucine-rich repeat protein 2 (745 aa).

The signal sequence occupies residues 1 to 19; that stretch reads MGPFGALCLAWALLGVVRA. Residues 20–51 form the LRRNT domain; sequence CPEPCACVDKYAHQFADCAYKELREVPEGLPA. The Extracellular segment spans residues 20 to 589; it reads CPEPCACVDK…VFSTKKELPS (570 aa). 2 N-linked (GlcNAc...) asparagine glycosylation sites follow: N52 and N73. LRR repeat units lie at residues 52–73, 76–97, 100–123, 124–145, and 148–169; these read NVTTLSLSANKITVLRRGAFVN, QVTSLWLAHSEVRTVESGALAV, QLKNLDLSHNLISNFPWSDLRNLS, ALQLLKMNHNRLGSLPRDALGA, and DLRSLRINNNRLRTLEPGTFDA. N121 carries N-linked (GlcNAc...) asparagine glycosylation. Residues 181 to 232 enclose the LRRCT domain; the sequence is NPFHCSCGLVWLQAWAASTRVSLPEPDSIACASPPELQGVPVHRLPALPCAP. Positions 233–372 constitute an Ig-like domain; sequence PSVRLSAEPP…GTNSTSLRVT (140 aa). C260 and C356 form a disulfide bridge. The span at 290–300 shows a compositional bias: basic and acidic residues; sequence KEEDGGDKVED. Positions 290 to 328 are disordered; the sequence is KEEDGGDKVEDGEGDGDEDLPTQTEAPTPTPAPAWPAPP. Over residues 317–328 the composition is skewed to pro residues; it reads TPTPAPAWPAPP. N-linked (GlcNAc...) asparagine glycosylation is found at N338 and N365. The interval 376–423 is disordered; that stretch reads AGPPKHAPGTGEEPDAQVPTSERKATTKGRSNSVLPFKPEGKTKGQGL. N474 and N563 each carry an N-linked (GlcNAc...) asparagine glycan. Residues 590–610 traverse the membrane as a helical segment; it reads LLVIVTVSVFLLVLATVPLLG. Topologically, residues 611 to 745 are cytoplasmic; that stretch reads AACCHLLAKH…INGNYRQTAG (135 aa). A disordered region spans residues 654–697; that stretch reads SEKSYPARGEAGGEEPEEVPEEGLDEDVEQGDPSGDLQREESLA. A compositionally biased stretch (acidic residues) spans 665–683; the sequence is GGEEPEEVPEEGLDEDVEQ. Position 719 is a phosphotyrosine (Y719). S720 carries the post-translational modification Phosphoserine.

Homomultimer. Interacts with NTRK1/TrkA. As to expression, at 11.5 dpc, expressed in spinal nerves, their roots and the ventral spinal cord. At 12.5 dpc, detected in the ventral spinal cord, dorsal root ganglia (DRG), dorsal and ventral roots and sympathetic chain ganglia. At 12.5 dpc, expressed in almost all motor neurons which also express RET and in almost all DRG sensory neurons which also express NTRK1. At 18.5 dpc, expressed only in a subset of NTRK1-expressing neurons but still expressed in nearly all RET-expressing neurons.

The protein resides in the cell membrane. Functionally, required for axon extension during neural development. This chain is Immunoglobulin superfamily containing leucine-rich repeat protein 2 (Islr2), found in Mus musculus (Mouse).